A 398-amino-acid chain; its full sequence is Elongation factor Tu (398 aa).

The tr-type G domain occupies 10-207 (KPHVNIGTIG…TVDEYIPEPE (198 aa)). The interval 19 to 26 (GHVDHGKT) is G1. 19 to 26 (GHVDHGKT) contributes to the GTP binding site. Threonine 26 contacts Mg(2+). The G2 stretch occupies residues 63-67 (GITIN). The tract at residues 84–87 (DAPG) is G3. Residues 84–88 (DAPGH) and 139–142 (NKVD) each bind GTP. Residues 139–142 (NKVD) form a G4 region. The G5 stretch occupies residues 177–179 (SAL).

Belongs to the TRAFAC class translation factor GTPase superfamily. Classic translation factor GTPase family. EF-Tu/EF-1A subfamily. In terms of assembly, monomer.

It localises to the cytoplasm. The enzyme catalyses GTP + H2O = GDP + phosphate + H(+). In terms of biological role, GTP hydrolase that promotes the GTP-dependent binding of aminoacyl-tRNA to the A-site of ribosomes during protein biosynthesis. This chain is Elongation factor Tu, found in Streptococcus agalactiae serotype V (strain ATCC BAA-611 / 2603 V/R).